The sequence spans 109 residues: Tyrosine-protein phosphatase 4 (109 aa).

The region spanning 1–109 (SKSASIVMLT…QNSGNHPIVI (109 aa)) is the Tyrosine-protein phosphatase domain. Glu78 serves as a coordination point for substrate.

This sequence belongs to the protein-tyrosine phosphatase family.

The enzyme catalyses O-phospho-L-tyrosyl-[protein] + H2O = L-tyrosyl-[protein] + phosphate. This Styela plicata (Wrinkled sea squirt) protein is Tyrosine-protein phosphatase 4 (STY-4).